Here is a 393-residue protein sequence, read N- to C-terminus: LL-diaminopimelate aminotransferase (393 aa).

Substrate contacts are provided by Y14 and G41. Residues Y71, 104–105 (AK), Y128, N174, Y205, and 233–235 (SFS) each bind pyridoxal 5'-phosphate. K105, Y128, and N174 together coordinate substrate. K236 is subject to N6-(pyridoxal phosphate)lysine. Pyridoxal 5'-phosphate is bound by residues R244 and N275. Substrate contacts are provided by N275 and R369.

Belongs to the class-I pyridoxal-phosphate-dependent aminotransferase family. LL-diaminopimelate aminotransferase subfamily. In terms of assembly, homodimer. Pyridoxal 5'-phosphate is required as a cofactor.

It carries out the reaction (2S,6S)-2,6-diaminopimelate + 2-oxoglutarate = (S)-2,3,4,5-tetrahydrodipicolinate + L-glutamate + H2O + H(+). It participates in amino-acid biosynthesis; L-lysine biosynthesis via DAP pathway; LL-2,6-diaminopimelate from (S)-tetrahydrodipicolinate (aminotransferase route): step 1/1. Its function is as follows. Involved in the synthesis of meso-diaminopimelate (m-DAP or DL-DAP), required for both lysine and peptidoglycan biosynthesis. Catalyzes the direct conversion of tetrahydrodipicolinate to LL-diaminopimelate. In Chlamydia muridarum (strain MoPn / Nigg), this protein is LL-diaminopimelate aminotransferase.